We begin with the raw amino-acid sequence, 293 residues long: Succinate--CoA ligase [ADP-forming] subunit alpha (293 aa).

CoA-binding positions include 21 to 24 (TGKQ), Lys47, and 99 to 101 (ITE). Tyr162 is a binding site for substrate. Residue His249 is the Tele-phosphohistidine intermediate of the active site.

This sequence belongs to the succinate/malate CoA ligase alpha subunit family. Heterotetramer of two alpha and two beta subunits.

The enzyme catalyses succinate + ATP + CoA = succinyl-CoA + ADP + phosphate. It catalyses the reaction GTP + succinate + CoA = succinyl-CoA + GDP + phosphate. It functions in the pathway carbohydrate metabolism; tricarboxylic acid cycle; succinate from succinyl-CoA (ligase route): step 1/1. Succinyl-CoA synthetase functions in the citric acid cycle (TCA), coupling the hydrolysis of succinyl-CoA to the synthesis of either ATP or GTP and thus represents the only step of substrate-level phosphorylation in the TCA. The alpha subunit of the enzyme binds the substrates coenzyme A and phosphate, while succinate binding and nucleotide specificity is provided by the beta subunit. This Methanothermobacter thermautotrophicus (strain ATCC 29096 / DSM 1053 / JCM 10044 / NBRC 100330 / Delta H) (Methanobacterium thermoautotrophicum) protein is Succinate--CoA ligase [ADP-forming] subunit alpha.